Reading from the N-terminus, the 59-residue chain is Large ribosomal subunit protein bL32 (59 aa).

Residues 1-59 form a disordered region; it reads MAVQQNKKSPSKRGMHRSHDFLTNPPLAVEPTSGEIHLRHHVSPNGYYRGRKVLPAKGE. The span at 49–59 shows a compositional bias: basic residues; sequence RGRKVLPAKGE.

It belongs to the bacterial ribosomal protein bL32 family.

The sequence is that of Large ribosomal subunit protein bL32 from Methylobacillus flagellatus (strain ATCC 51484 / DSM 6875 / VKM B-1610 / KT).